A 78-amino-acid polypeptide reads, in one-letter code: RNA-binding protein Hfq (78 aa).

A Sm domain is found at 10–70 (DLFLNSVRKQ…ISTIMPSQPV (61 aa)).

Belongs to the Hfq family. As to quaternary structure, homohexamer.

Functionally, RNA chaperone that binds small regulatory RNA (sRNAs) and mRNAs to facilitate mRNA translational regulation in response to envelope stress, environmental stress and changes in metabolite concentrations. Also binds with high specificity to tRNAs. In Brucella abortus (strain S19), this protein is RNA-binding protein Hfq.